The primary structure comprises 66 residues: Sarcoplasmic/endoplasmic reticulum calcium ATPase regulator ARLN (66 aa).

Met-1 bears the N-acetylmethionine mark. The tract at residues 1–37 (MEVDAPGVDGRDGLRERRGFSEGGRQNFDVRPQSGAN) is disordered. Positions 9–20 (DGRDGLRERRGF) are enriched in basic and acidic residues. Residues 45-65 (WLDLWLFILFDVVVFLFVYFL) traverse the membrane as a helical segment.

Homooligomer. Can also form heterooligomers with other sarcoplasmic/endoplasmic reticulum calcium ATPase (SERCA) regulators ERLN, PLN, SLN and STRIT1/DWORF. Monomer. Interacts as a monomer with ATP2A2/SERCA2; the interaction results in inhibition of ATP2A2 Ca(2+) affinity.

It is found in the endoplasmic reticulum membrane. Its function is as follows. Inhibits the activity of the calcium ATPases ATP2A2/SERCA2 and ATP2A3/SERCA3 by decreasing their apparent affinity for Ca(2+). The protein is Sarcoplasmic/endoplasmic reticulum calcium ATPase regulator ARLN of Homo sapiens (Human).